Here is a 274-residue protein sequence, read N- to C-terminus: Cytochrome b-c1 complex subunit Rieske, mitochondrial (274 aa).

The Mitochondrial matrix portion of the chain corresponds to 79 to 103; the sequence is SHTDIKVPDFSDYRRSEVLDTTKSS. A helical membrane pass occupies residues 104-140; that stretch reads RESSDARKGFSYLVTATTAVGVTYAAKSIVTQFVSSM. Residues 141-274 lie on the Mitochondrial intermembrane side of the membrane; it reads SASADVLAMS…FTSDDLVIVG (134 aa). The 86-residue stretch at 187–272 folds into the Rieske domain; it reads EAAVELSQLR…YEFTSDDLVI (86 aa). [2Fe-2S] cluster contacts are provided by Cys217, His219, Cys236, His239, and Ser241. The cysteines at positions 222 and 238 are disulfide-linked.

Belongs to the Rieske iron-sulfur protein family. Component of the ubiquinol-cytochrome c oxidoreductase (cytochrome b-c1 complex, complex III, CIII), a multisubunit enzyme composed of 11 subunits. The complex is composed of 3 respiratory subunits cytochrome b, cytochrome c1 and Rieske protein UQCRFS1, 2 core protein subunits UQCRC1/QCR1 and UQCRC2/QCR2, and 6 low-molecular weight protein subunits UQCRH/QCR6, UQCRB/QCR7, UQCRQ/QCR8, UQCR10/QCR9, UQCR11/QCR10 and subunit 9, the cleavage product of Rieske protein UQCRFS1. The complex exists as an obligatory dimer and forms supercomplexes (SCs) in the inner mitochondrial membrane with NADH-ubiquinone oxidoreductase (complex I, CI) and cytochrome c oxidase (complex IV, CIV), resulting in different assemblies (supercomplex SCI(1)III(2)IV(1) and megacomplex MCI(2)III(2)IV(2)). Incorporation of the Rieske protein UQCRFS1 is the penultimate step in complex III assembly. Interacts with TTC19, which is involved in the clearance of UQCRFS1 fragments. In terms of assembly, component of the ubiquinol-cytochrome c oxidoreductase (cytochrome b-c1 complex, complex III, CIII). Subunit 9 corresponds to the mitochondrial targeting sequence (MTS) of Rieske protein UQCRFS1. It is retained after processing and incorporated inside complex III, where it remains bound to the complex and localizes between the 2 core subunits UQCRC1/QCR1 and UQCRC2/QCR2. [2Fe-2S] cluster serves as cofactor. Proteolytic processing is necessary for the correct insertion of UQCRFS1 in the complex III dimer. Several fragments are generated during UQCRFS1 insertion, most probably due to the endogenous matrix-processing peptidase (MPP) activity of the 2 core protein subunits UQCRC1/QCR1 and UQCRC2/QCR2, which are homologous to the 2 mitochondrial-processing peptidase (MPP) subunits beta-MPP and alpha-MPP respectively. The action of the protease is also necessary for the clearance of the UQCRFS1 fragments.

It is found in the mitochondrion inner membrane. The catalysed reaction is a quinol + 2 Fe(III)-[cytochrome c](out) = a quinone + 2 Fe(II)-[cytochrome c](out) + 2 H(+)(out). Functionally, component of the ubiquinol-cytochrome c oxidoreductase, a multisubunit transmembrane complex that is part of the mitochondrial electron transport chain which drives oxidative phosphorylation. The respiratory chain contains 3 multisubunit complexes succinate dehydrogenase (complex II, CII), ubiquinol-cytochrome c oxidoreductase (cytochrome b-c1 complex, complex III, CIII) and cytochrome c oxidase (complex IV, CIV), that cooperate to transfer electrons derived from NADH and succinate to molecular oxygen, creating an electrochemical gradient over the inner membrane that drives transmembrane transport and the ATP synthase. The cytochrome b-c1 complex catalyzes electron transfer from ubiquinol to cytochrome c, linking this redox reaction to translocation of protons across the mitochondrial inner membrane, with protons being carried across the membrane as hydrogens on the quinol. In the process called Q cycle, 2 protons are consumed from the matrix, 4 protons are released into the intermembrane space and 2 electrons are passed to cytochrome c. The Rieske protein is a catalytic core subunit containing a [2Fe-2S] iron-sulfur cluster. It cycles between 2 conformational states during catalysis to transfer electrons from the quinol bound in the Q(0) site in cytochrome b to cytochrome c1. Incorporation of UQCRFS1 is the penultimate step in complex III assembly. Its function is as follows. Component of the ubiquinol-cytochrome c oxidoreductase (cytochrome b-c1 complex, complex III, CIII). UQCRFS1 undergoes proteolytic processing once it is incorporated in the complex III dimer. One of the fragments, called subunit 9, corresponds to its mitochondrial targeting sequence (MTS). The proteolytic processing is necessary for the correct insertion of UQCRFS1 in the complex III dimer, but the persistence of UQCRFS1-derived fragments may prevent newly imported UQCRFS1 to be processed and assembled into complex III and is detrimental for the complex III structure and function. In Aotus azarae (Azara's night monkey), this protein is Cytochrome b-c1 complex subunit Rieske, mitochondrial (UQCRFS1).